A 388-amino-acid chain; its full sequence is Succinate--CoA ligase [ADP-forming] subunit beta (388 aa).

Residues 9–244 (KGILSGFDVR…PHEYSEEELE (236 aa)) form the ATP-grasp domain. Residues Lys-46, 53–55 (GRG), Glu-99, Val-102, and Glu-107 each bind ATP. 2 residues coordinate Mg(2+): Asn-199 and Asp-213. Residues Asn-264 and 320–322 (GIM) each bind substrate.

It belongs to the succinate/malate CoA ligase beta subunit family. As to quaternary structure, heterotetramer of two alpha and two beta subunits. Mg(2+) serves as cofactor.

It catalyses the reaction succinate + ATP + CoA = succinyl-CoA + ADP + phosphate. It carries out the reaction GTP + succinate + CoA = succinyl-CoA + GDP + phosphate. It participates in carbohydrate metabolism; tricarboxylic acid cycle; succinate from succinyl-CoA (ligase route): step 1/1. In terms of biological role, succinyl-CoA synthetase functions in the citric acid cycle (TCA), coupling the hydrolysis of succinyl-CoA to the synthesis of either ATP or GTP and thus represents the only step of substrate-level phosphorylation in the TCA. The beta subunit provides nucleotide specificity of the enzyme and binds the substrate succinate, while the binding sites for coenzyme A and phosphate are found in the alpha subunit. The protein is Succinate--CoA ligase [ADP-forming] subunit beta of Anaplasma phagocytophilum (strain HZ).